An 88-amino-acid chain; its full sequence is U24 protein (88 aa).

Threonine 6 is modified (phosphothreonine). The PPXY motif signature appears at 8-11 (PPSY). The chain crosses the membrane as a helical span at residues 58 to 78 (FAFLVLTGLAIAMILFIAFVI).

In terms of assembly, interacts with host ITCH; this interaction probably mediates ITCH degradation. Interacts probably with NEDD4.

The protein resides in the membrane. Functionally, down-regulates the TCR/CD3E complex and the transferrin receptor TFRC in host T-cells by blocking them from recycling back to the cell surface. The chain is U24 protein (U24) from Human herpesvirus 6B (strain Z29) (HHV-6 variant B).